The sequence spans 805 residues: U-box domain-containing protein 32 (805 aa).

2 disordered regions span residues 181–205 (SNNRQTMPPLVQLDSDNETRKSEKL) and 226–284 (EKDT…EREG). Basic and acidic residues predominate over residues 226-239 (EKDTGQLEREKVEP). A compositionally biased stretch (low complexity) spans 245 to 257 (FSSGSSSSFGEPV). Positions 331 to 434 (LEGLCIKESS…EVNALRRLVK (104 aa)) form a coiled coil. One can recognise a Protein kinase domain in the interval 460–718 (FDPSWKLGEG…FIDRMKAPEV (259 aa)). ATP-binding positions include 466 to 474 (LGEGKYGSV) and Lys487. The 72-residue stretch at 734–805 (RPPSHYLCPI…LAIQDWQNQW (72 aa)) folds into the U-box domain.

This sequence belongs to the protein kinase superfamily. Ser/Thr protein kinase family.

It carries out the reaction S-ubiquitinyl-[E2 ubiquitin-conjugating enzyme]-L-cysteine + [acceptor protein]-L-lysine = [E2 ubiquitin-conjugating enzyme]-L-cysteine + N(6)-ubiquitinyl-[acceptor protein]-L-lysine.. It participates in protein modification; protein ubiquitination. Functions as an E3 ubiquitin ligase. This Arabidopsis thaliana (Mouse-ear cress) protein is U-box domain-containing protein 32 (PUB32).